The chain runs to 427 residues: Serine--tRNA ligase (427 aa).

233 to 235 contacts L-serine; that stretch reads TAE. An ATP-binding site is contributed by 264 to 266; that stretch reads RSE. L-serine is bound at residue E287. 351–354 provides a ligand contact to ATP; that stretch reads EISS. Position 386 (S386) interacts with L-serine.

The protein belongs to the class-II aminoacyl-tRNA synthetase family. Type-1 seryl-tRNA synthetase subfamily. As to quaternary structure, homodimer. The tRNA molecule binds across the dimer.

The protein localises to the cytoplasm. The catalysed reaction is tRNA(Ser) + L-serine + ATP = L-seryl-tRNA(Ser) + AMP + diphosphate + H(+). It carries out the reaction tRNA(Sec) + L-serine + ATP = L-seryl-tRNA(Sec) + AMP + diphosphate + H(+). It functions in the pathway aminoacyl-tRNA biosynthesis; selenocysteinyl-tRNA(Sec) biosynthesis; L-seryl-tRNA(Sec) from L-serine and tRNA(Sec): step 1/1. Its function is as follows. Catalyzes the attachment of serine to tRNA(Ser). Is also able to aminoacylate tRNA(Sec) with serine, to form the misacylated tRNA L-seryl-tRNA(Sec), which will be further converted into selenocysteinyl-tRNA(Sec). In Thiobacillus denitrificans (strain ATCC 25259 / T1), this protein is Serine--tRNA ligase.